Here is a 484-residue protein sequence, read N- to C-terminus: TPR repeat-containing protein YvcD (484 aa).

TPR repeat units lie at residues 21 to 54 (GQYF…EPED), 55 to 88 (SEML…LEAE), and 187 to 220 (WSAY…NEGN).

The chain is TPR repeat-containing protein YvcD (yvcD) from Bacillus subtilis (strain 168).